Here is a 623-residue protein sequence, read N- to C-terminus: V-type proton ATPase catalytic subunit A (623 aa).

An ATP-binding site is contributed by 252 to 259 (GAFGCGKT).

Belongs to the ATPase alpha/beta chains family. V-ATPase is a heteromultimeric enzyme composed of a peripheral catalytic V1 complex (main components: subunits A, B, C, D, E, and F) attached to an integral membrane V0 proton pore complex (main component: the proteolipid protein).

It carries out the reaction ATP + H2O + 4 H(+)(in) = ADP + phosphate + 5 H(+)(out). Catalytic subunit of the peripheral V1 complex of vacuolar ATPase. V-ATPase vacuolar ATPase is responsible for acidifying a variety of intracellular compartments in eukaryotic cells. In Citrus unshiu (Satsuma mandarin), this protein is V-type proton ATPase catalytic subunit A.